A 686-amino-acid polypeptide reads, in one-letter code: Rhophilin-2 (686 aa).

The 75-residue stretch at 26–100 (NPLAQTGRSK…LEGLNISVGV (75 aa)) folds into the REM-1 domain. The interval 46-66 (QILKAVRMRTGAENLLKVATN) is interaction with Rho. The BRO1 domain occupies 111–502 (PLIPLGLKET…TDFFQKLGPL (392 aa)). Residues 515–593 (RGIHFTVEEG…EEVEMKVVSL (79 aa)) form the PDZ domain. Phosphothreonine is present on threonine 655.

It belongs to the RHPN family. Interacts with GTP-bound RhoA and RhoB. Interacts with both GTP- and GDP-bound RhoA. Interacts with KRT18.

The protein resides in the cytoplasm. Its subcellular location is the perinuclear region. Its function is as follows. Binds specifically to GTP-Rho. May function in a Rho pathway to limit stress fiber formation and/or increase the turnover of F-actin structures in the absence of high levels of RhoA activity. The sequence is that of Rhophilin-2 (Rhpn2) from Mus musculus (Mouse).